We begin with the raw amino-acid sequence, 61 residues long: Large ribosomal subunit protein bL28 (61 aa).

The tract at residues 1–21 is disordered; it reads MAKDYVTGKKTTFGNKRSHAM.

This sequence belongs to the bacterial ribosomal protein bL28 family.

The polypeptide is Large ribosomal subunit protein bL28 (Lactobacillus helveticus (strain DPC 4571)).